We begin with the raw amino-acid sequence, 137 residues long: Small ribosomal subunit protein uS12 (137 aa).

Residue D102 is modified to 3-methylthioaspartic acid.

Belongs to the universal ribosomal protein uS12 family. As to quaternary structure, part of the 30S ribosomal subunit. Contacts proteins S8 and S17. May interact with IF1 in the 30S initiation complex.

Its function is as follows. With S4 and S5 plays an important role in translational accuracy. Interacts with and stabilizes bases of the 16S rRNA that are involved in tRNA selection in the A site and with the mRNA backbone. Located at the interface of the 30S and 50S subunits, it traverses the body of the 30S subunit contacting proteins on the other side and probably holding the rRNA structure together. The combined cluster of proteins S8, S12 and S17 appears to hold together the shoulder and platform of the 30S subunit. The polypeptide is Small ribosomal subunit protein uS12 (Mycoplasmopsis agalactiae (strain NCTC 10123 / CIP 59.7 / PG2) (Mycoplasma agalactiae)).